The sequence spans 489 residues: Probable transporter MCH1 (489 aa).

12 helical membrane-spanning segments follow: residues 34 to 54, 68 to 88, 94 to 114, 124 to 144, 156 to 175, 196 to 216, 262 to 282, 302 to 324, 335 to 355, 359 to 379, 403 to 423, and 463 to 483; these read ISLI…FTPV, IIGS…GYLA, VLLS…AATV, LAIS…TALL, LTIS…GSRV, FSFL…VVSI, ISTY…EMYI, VAIH…DFLV, LLSI…STFV, YYII…LYPT, IGST…CGVF, and SLII…ILRI.

It belongs to the major facilitator superfamily.

Its subcellular location is the vacuole membrane. Its function is as follows. Probable transporter. The protein is Probable transporter MCH1 (MCH1) of Wickerhamomyces anomalus (Yeast).